The primary structure comprises 95 residues: Co-chaperonin GroES (95 aa).

This sequence belongs to the GroES chaperonin family. In terms of assembly, heptamer of 7 subunits arranged in a ring. Interacts with the chaperonin GroEL.

It localises to the cytoplasm. Its function is as follows. Together with the chaperonin GroEL, plays an essential role in assisting protein folding. The GroEL-GroES system forms a nano-cage that allows encapsulation of the non-native substrate proteins and provides a physical environment optimized to promote and accelerate protein folding. GroES binds to the apical surface of the GroEL ring, thereby capping the opening of the GroEL channel. The polypeptide is Co-chaperonin GroES (Novosphingobium aromaticivorans (strain ATCC 700278 / DSM 12444 / CCUG 56034 / CIP 105152 / NBRC 16084 / F199)).